The following is a 125-amino-acid chain: Glycine cleavage system H protein (125 aa).

The region spanning 22–104 is the Lipoyl-binding domain; that stretch reads SYIIGITDFA…YDTGWILKLT (83 aa). Lys63 carries the N6-lipoyllysine modification.

Belongs to the GcvH family. In terms of assembly, the glycine cleavage system is composed of four proteins: P, T, L and H. The cofactor is (R)-lipoate.

Its function is as follows. The glycine cleavage system catalyzes the degradation of glycine. The H protein shuttles the methylamine group of glycine from the P protein to the T protein. Is also involved in protein lipoylation via its role as an octanoyl/lipoyl carrier protein intermediate. In Listeria innocua serovar 6a (strain ATCC BAA-680 / CLIP 11262), this protein is Glycine cleavage system H protein.